A 190-amino-acid chain; its full sequence is Adenylate kinase (190 aa).

ATP is bound at residue 11-16; it reads GAGKGT. An NMP region spans residues 31-60; it reads STGDIFRFNIKNETELGKLAKTFMDKGDLV. Residues threonine 32, arginine 37, 58–60, 86–89, and glutamine 93 contribute to the AMP site; these read DLV and GFPR. The tract at residues 127-137 is LID; the sequence is ERGKTSGRVDD. ATP is bound at residue arginine 128. Arginine 134 and arginine 146 together coordinate AMP. Glycine 174 contacts ATP.

Belongs to the adenylate kinase family. As to quaternary structure, monomer.

The protein resides in the cytoplasm. The enzyme catalyses AMP + ATP = 2 ADP. Its pathway is purine metabolism; AMP biosynthesis via salvage pathway; AMP from ADP: step 1/1. Its function is as follows. Catalyzes the reversible transfer of the terminal phosphate group between ATP and AMP. Plays an important role in cellular energy homeostasis and in adenine nucleotide metabolism. This chain is Adenylate kinase, found in Flavobacterium psychrophilum (strain ATCC 49511 / DSM 21280 / CIP 103535 / JIP02/86).